The sequence spans 388 residues: Pre-mRNA-splicing factor cwf2 (388 aa).

Residues 43 to 63 are disordered; the sequence is VKRKKQPARKQIETRPEYEME. A C3H1-type zinc finger spans residues 111–138; that stretch reads NPGSFFCLYFARGMCSEGSKCEYLHRLP. Residues 174–248 form the RRM domain; it reads YTLYVGGITP…ECLNVRWATT (75 aa). Residues 331-352 form a disordered region; it reads PNKSQSEEGSNDDHKSVTTTES.

This sequence belongs to the RRM CWC2 family. Belongs to the 40S cdc5-associated complex (or cwf complex), a spliceosome sub-complex reminiscent of a late-stage spliceosome composed of the U2, U5 and U6 snRNAs and at least brr2, cdc5, cwf2/prp3, cwf3/syf1, cwf4/syf3, cwf5/ecm2, spp42/cwf6, cwf7/spf27, cwf8, cwf9, cwf10, cwf11, cwf12, prp45/cwf13, cwf14, cwf15, cwf16, cwf17, cwf18, cwf19, cwf20, cwf21, cwf22, cwf23, cwf24, cwf25, cwf26, cyp7/cwf27, cwf28, cwf29/ist3, lea1, msl1, prp5/cwf1, prp10, prp12/sap130, prp17, prp22, sap61, sap62, sap114, sap145, slu7, smb1, smd1, smd3, smf1, smg1 and syf2.

It is found in the nucleus. Its function is as follows. Involved in the first step of pre-mRNA splicing. Required for cell growth and cell cycle control. Plays a role in the levels of the U1, U4, U5 and U6 snRNAs and the maintenance of the U4/U6 snRNA complex. May provide the link between the 'nineteen complex' NTC spliceosome protein complex and the spliceosome through the U6 snRNA. Associates predominantly with U6 snRNAs in assembled active spliceosomes. Binds directly to the internal stem-loop (ISL) domain of the U6 snRNA and to the pre-mRNA intron near the 5' splice site during the activation and catalytic phases of the spliceosome cycle. Involved in pre-mRNA splicing. In Schizosaccharomyces pombe (strain 972 / ATCC 24843) (Fission yeast), this protein is Pre-mRNA-splicing factor cwf2 (cwf2).